We begin with the raw amino-acid sequence, 97 residues long: Co-chaperonin GroES (97 aa).

This sequence belongs to the GroES chaperonin family. Heptamer of 7 subunits arranged in a ring. Interacts with the chaperonin GroEL.

The protein resides in the cytoplasm. In terms of biological role, together with the chaperonin GroEL, plays an essential role in assisting protein folding. The GroEL-GroES system forms a nano-cage that allows encapsulation of the non-native substrate proteins and provides a physical environment optimized to promote and accelerate protein folding. GroES binds to the apical surface of the GroEL ring, thereby capping the opening of the GroEL channel. In Nocardioides sp. (strain ATCC BAA-499 / JS614), this protein is Co-chaperonin GroES.